We begin with the raw amino-acid sequence, 79 residues long: Endothelin-2 (79 aa).

Residues 1–23 (PEQTAPYGLGNPPRRRRRSLPRR) are disordered. Residues 24-39 (CQCSSARDPSCATFCL) are endothelin-like. Positions 51–79 (SRKSPADVFQTGKTGATRGELLQRLRDIS) are disordered.

It belongs to the endothelin/sarafotoxin family.

Its subcellular location is the secreted. Functionally, endothelins are endothelium-derived vasoconstrictor peptides. The chain is Endothelin-2 (EDN2) from Macaca fascicularis (Crab-eating macaque).